The primary structure comprises 459 residues: Ribulose bisphosphate carboxylase (459 aa).

Position 111 (Asn111) interacts with substrate. The Proton acceptor role is filled by Lys166. Lys168 lines the substrate pocket. 3 residues coordinate Mg(2+): Lys191, Asp193, and Glu194. Lys191 carries the post-translational modification N6-carboxylysine. His287 acts as the Proton acceptor in catalysis. Arg288, His321, and Ser368 together coordinate substrate.

This sequence belongs to the RuBisCO large chain family. Type II subfamily. Homodimer. Mg(2+) is required as a cofactor.

The enzyme catalyses 2 (2R)-3-phosphoglycerate + 2 H(+) = D-ribulose 1,5-bisphosphate + CO2 + H2O. The catalysed reaction is D-ribulose 1,5-bisphosphate + O2 = 2-phosphoglycolate + (2R)-3-phosphoglycerate + 2 H(+). RuBisCO catalyzes two reactions: the carboxylation of D-ribulose 1,5-bisphosphate, the primary event in carbon dioxide fixation, as well as the oxidative fragmentation of the pentose substrate. Both reactions occur simultaneously and in competition at the same active site. In Albidiferax ferrireducens (strain ATCC BAA-621 / DSM 15236 / T118) (Rhodoferax ferrireducens), this protein is Ribulose bisphosphate carboxylase.